We begin with the raw amino-acid sequence, 123 residues long: Protein Wnt-7(I) (123 aa).

The O-palmitoleoyl serine; by PORCN moiety is linked to residue S1. Residues C89 and C104 are joined by a disulfide bond. N90 is a glycosylation site (N-linked (GlcNAc...) asparagine). Residues 121–123 carry the Microbody targeting signal motif; the sequence is CKF.

Belongs to the Wnt family. Post-translationally, palmitoleoylation is required for efficient binding to frizzled receptors. Depalmitoleoylation leads to Wnt signaling pathway inhibition.

The protein resides in the secreted. The protein localises to the extracellular space. It localises to the extracellular matrix. Functionally, ligand for members of the frizzled family of seven transmembrane receptors. Probable developmental protein. May be a signaling molecule which affects the development of discrete regions of tissues. Is likely to signal over only few cell diameters. This Eptatretus stoutii (Pacific hagfish) protein is Protein Wnt-7(I) (WNT-7(I)).